The sequence spans 319 residues: G-protein coupled receptor 55 (319 aa).

At 1–21 (MSQQNTSGDCLFDGVNELMKT) the chain is on the extracellular side. Residue asparagine 5 is glycosylated (N-linked (GlcNAc...) asparagine). The helical transmembrane segment at 22–42 (LQFAVHIPTFVLGLLLNLLAI) threads the bilayer. Over 43 to 58 (HGFSTFLKNRWPDYAA) the chain is Cytoplasmic. The chain crosses the membrane as a helical span at residues 59-79 (TSIYMINLAVFDLLLVLSLPF). The Extracellular segment spans residues 80–94 (KMVLSQVQSPFPSLC). A helical transmembrane segment spans residues 95–115 (TLVECLYFVSMYGSVFTICFI). Residues 116–137 (SMDRFLAIRYPLLVSHLRSPRK) are Cytoplasmic-facing. A helical membrane pass occupies residues 138–158 (IFGICCTIWVLVWTGSIPIYS). Topologically, residues 159-180 (FHGKVEKYMCFHNMSDDTWSAK) are extracellular. Asparagine 171 is a glycosylation site (N-linked (GlcNAc...) asparagine). A helical membrane pass occupies residues 181-201 (VFFPLEVFGFLLPMGIMGFCC). Residues 202–231 (SRSIHILLGRRDHTQDWVQQKACIYSIAAS) lie on the Cytoplasmic side of the membrane. The helical transmembrane segment at 232–252 (LAVFVVSFLPVHLGFFLQFLV) threads the bilayer. Residues 253–271 (RNSFIVECRAKQSISFFLQ) lie on the Extracellular side of the membrane. Residues 272–292 (LSMCFSNVNCCLDVFCYYFVI) form a helical membrane-spanning segment. Residues 293–319 (KEFRMNIRAHRPSRVQLVLQDTTISRG) lie on the Cytoplasmic side of the membrane.

The protein belongs to the G-protein coupled receptor 1 family. Expressed in the caudate nucleus and putamen, but not detected in the hippocampus, thalamus, pons cerebellum, frontal cortex of the brain or in the liver. Expressed in osteoclasts and osteoblasts. Higly expressed in macrophages and B-cells.

It localises to the cell membrane. G-protein coupled receptor that binds to several ligands including 2-arachidonoyl lysophosphatidylinositol or lysophosphatidylglucoside with high affinity, leading to rapid and transient activation of numerous intracellular signaling pathways. Induces the Ca(2+) release from intracellular stores via ERK, the heterotrimeric G protein GNA13 and RHOA leading to morphological changes including cell rounding and stress fiber formation. In macrophages, acts downstream of lysophosphatidylglucoside to inhibit the translocation of the phospholipid-transporting ABCA1 to plasma membrane and subsequent cholesterol efflux leading to lipid accumulation and foam cell formation. This Homo sapiens (Human) protein is G-protein coupled receptor 55 (GPR55).